Consider the following 499-residue polypeptide: Aspartyl/glutamyl-tRNA(Asn/Gln) amidotransferase subunit B (499 aa).

Belongs to the GatB/GatE family. GatB subfamily. In terms of assembly, heterotrimer of A, B and C subunits.

The catalysed reaction is L-glutamyl-tRNA(Gln) + L-glutamine + ATP + H2O = L-glutaminyl-tRNA(Gln) + L-glutamate + ADP + phosphate + H(+). It catalyses the reaction L-aspartyl-tRNA(Asn) + L-glutamine + ATP + H2O = L-asparaginyl-tRNA(Asn) + L-glutamate + ADP + phosphate + 2 H(+). In terms of biological role, allows the formation of correctly charged Asn-tRNA(Asn) or Gln-tRNA(Gln) through the transamidation of misacylated Asp-tRNA(Asn) or Glu-tRNA(Gln) in organisms which lack either or both of asparaginyl-tRNA or glutaminyl-tRNA synthetases. The reaction takes place in the presence of glutamine and ATP through an activated phospho-Asp-tRNA(Asn) or phospho-Glu-tRNA(Gln). This chain is Aspartyl/glutamyl-tRNA(Asn/Gln) amidotransferase subunit B, found in Bartonella quintana (strain Toulouse) (Rochalimaea quintana).